Reading from the N-terminus, the 134-residue chain is Ribonuclease VapC40 (134 aa).

Residues 3–126 enclose the PINc domain; sequence APDTSVLVAG…LRAVETYERL (124 aa). Residues Asp5 and Asp98 each coordinate Mg(2+).

The protein belongs to the PINc/VapC protein family. Mg(2+) serves as cofactor.

In terms of biological role, toxic component of a type II toxin-antitoxin (TA) system. An RNase. Its cognate antitoxin is VapB40. This chain is Ribonuclease VapC40, found in Mycobacterium tuberculosis (strain CDC 1551 / Oshkosh).